An 89-amino-acid chain; its full sequence is Small ribosomal subunit protein bS20 (89 aa).

The interval 1-26 (MANIKASKKDALTSEKRRKKNSSRRS) is disordered. Residues 16 to 26 (KRRKKNSSRRS) show a composition bias toward basic residues.

This sequence belongs to the bacterial ribosomal protein bS20 family.

Its function is as follows. Binds directly to 16S ribosomal RNA. The protein is Small ribosomal subunit protein bS20 of Buchnera aphidicola subsp. Acyrthosiphon pisum (strain 5A).